The chain runs to 369 residues: tRNA 2-selenouridine synthase (369 aa).

One can recognise a Rhodanese domain in the interval 12–136 (FLDDIPLMDV…LRNFLFETTR (125 aa)). Cys95 acts as the S-selanylcysteine intermediate in catalysis.

The protein belongs to the SelU family. As to quaternary structure, monomer.

It carries out the reaction 5-methylaminomethyl-2-thiouridine(34) in tRNA + selenophosphate + (2E)-geranyl diphosphate + H2O + H(+) = 5-methylaminomethyl-2-selenouridine(34) in tRNA + (2E)-thiogeraniol + phosphate + diphosphate. The catalysed reaction is 5-methylaminomethyl-2-thiouridine(34) in tRNA + (2E)-geranyl diphosphate = 5-methylaminomethyl-S-(2E)-geranyl-thiouridine(34) in tRNA + diphosphate. It catalyses the reaction 5-methylaminomethyl-S-(2E)-geranyl-thiouridine(34) in tRNA + selenophosphate + H(+) = 5-methylaminomethyl-2-(Se-phospho)selenouridine(34) in tRNA + (2E)-thiogeraniol. The enzyme catalyses 5-methylaminomethyl-2-(Se-phospho)selenouridine(34) in tRNA + H2O = 5-methylaminomethyl-2-selenouridine(34) in tRNA + phosphate. Involved in the post-transcriptional modification of the uridine at the wobble position (U34) of tRNA(Lys), tRNA(Glu) and tRNA(Gln). Catalyzes the conversion of 2-thiouridine (S2U-RNA) to 2-selenouridine (Se2U-RNA). Acts in a two-step process involving geranylation of 2-thiouridine (S2U) to S-geranyl-2-thiouridine (geS2U) and subsequent selenation of the latter derivative to 2-selenouridine (Se2U) in the tRNA chain. In Pseudomonas aeruginosa (strain LESB58), this protein is tRNA 2-selenouridine synthase.